A 145-amino-acid chain; its full sequence is HTH-type transcriptional regulator MhqR (145 aa).

Positions 5–137 (SLKLFIVLSR…CTEMLKRVGL (133 aa)) constitute an HTH marR-type domain. The H-T-H motif DNA-binding region spans 51 to 74 (LQQIGDKILLASGSITYVVDKLEQ).

Its function is as follows. Negatively regulates mhqA, mhqED, mhqNOP, and azoR2 which may contribute to the degradation of aromatic compounds. The polypeptide is HTH-type transcriptional regulator MhqR (mhqR) (Bacillus subtilis (strain 168)).